The following is a 347-amino-acid chain: Leucine-rich repeat-containing protein 69 (347 aa).

LRR repeat units follow at residues 38-60, 61-82, 84-105, 108-129, 131-153, 154-175, 177-199, and 200-222; these read GLKTLVLQNNLIPKVCPELCNLT, QLTTLNLGNNLLEEVPEEMKYL, SLKNLHLSGNRICRFAPGACDG, NLILLNLNNNHLTQLPQEVSRL, SLTYMSINYNQLASIPRELCFLE, NLVELQLNYNQLICIPEEIKFL, KLQKLLLARNNIGVLPEELCDLK, and KLRILDIAGNIIQIFPSGFQDLK.

Belongs to the LRRC69 family.

The chain is Leucine-rich repeat-containing protein 69 (LRRC69) from Homo sapiens (Human).